The following is a 173-amino-acid chain: Alpha-crystallin A chain (173 aa).

Met1 carries the post-translational modification N-acetylmethionine. The required for complex formation with BFSP1 and BFSP2 stretch occupies residues 1 to 63; sequence MDVTIQHPWF…RTVLDSGISE (63 aa). The residue at position 6 (Gln6) is a Deamidated glutamine; partial. Ser45 carries the phosphoserine modification. Gln50 is modified (deamidated glutamine; partial). The sHSP domain occupies 52 to 162; sequence LFRTVLDSGI…SHSERAIPVS (111 aa). An N6-acetyllysine modification is found at Lys99. His100 lines the Zn(2+) pocket. The residue at position 101 (Asn101) is a Deamidated asparagine; partial. Zn(2+) contacts are provided by Glu102 and His107. Ser122 is subject to Phosphoserine. Asn123 is subject to Deamidated asparagine; partial. Residues Cys131 and Cys142 are joined by a disulfide bond. Gln147 bears the Deamidated glutamine; partial mark. The interval 147 to 173 is disordered; sequence QSGMDASHSERAIPVSREEKPSSAPSS. Positions 153-167 are enriched in basic and acidic residues; the sequence is SHSERAIPVSREEKP. His154 contributes to the Zn(2+) binding site. The O-linked (GlcNAc) serine glycan is linked to Ser162.

It belongs to the small heat shock protein (HSP20) family. Heteromer composed of three CRYAA and one CRYAB subunits. Inter-subunit bridging via zinc ions enhances stability, which is crucial as there is no protein turn over in the lens. Can also form homodimers and homotetramers (dimers of dimers) which serve as the building blocks of homooligomers. Within homooligomers, the zinc-binding motif is created from residues of 3 different molecules. His-100 and Glu-102 from one molecule are ligands of the zinc ion, and His-107 and His-154 residues from additional molecules complete the site with tetrahedral coordination geometry. Part of a complex required for lens intermediate filament formation composed of BFSP1, BFSP2 and CRYAA. Post-translationally, undergoes age-dependent proteolytical cleavage at the C-terminus.

The protein localises to the cytoplasm. Its subcellular location is the nucleus. Functionally, contributes to the transparency and refractive index of the lens. In its oxidized form (absence of intramolecular disulfide bond), acts as a chaperone, preventing aggregation of various proteins under a wide range of stress conditions. Required for the correct formation of lens intermediate filaments as part of a complex composed of BFSP1, BFSP2 and CRYAA. The polypeptide is Alpha-crystallin A chain (CRYAA) (Procavia capensis (Rock hyrax)).